Here is a 392-residue protein sequence, read N- to C-terminus: MSVIIVGGGMAGATLALAISRLSHGALPVHLIEATAPESHAHPGFDGRAIALAAGTCQQLARIGVWQSLADCATAITTVHVSDRGHAGFVTLAAEDYQLAALGQVVELHNVGQRLFALLRKAPGVTLHCPDRVANVARTQSHVEVTLESGETLTGRVLVAADGTHSALATACGVDWQQEPYEQLAVIANVATSVAHEGRAFERFTQHGPLAMLPMSDGRCSLVWCHPLERREEVLSWSDEKFCRELQSAFGWRLGKITHAGKRSAYPLALTHAARSITHRTVLVGNAAQTLHPIAGQGFNLGMRDVMSLAETLTQAQERGEDMGDYGVLCRYQQRRQSDREATIGVTDSLVHLFANRWAPLVVGRNIGLMTMELFTPARDVLAQRTLGWVAR.

The protein belongs to the UbiH/COQ6 family. As to quaternary structure, component of the Ubi complex metabolon, which regroups five ubiquinone biosynthesis proteins (UbiE, UbiF, UbiG, UbiH and UbiI) and two accessory factors (UbiK and the lipid-binding protein UbiJ). It depends on FAD as a cofactor.

Its subcellular location is the cytoplasm. It participates in cofactor biosynthesis; ubiquinone biosynthesis. Functionally, is likely an oxygenase that introduces the hydroxyl group at carbon four of 2-octaprenyl-6-methoxyphenol resulting in the formation of 2-octaprenyl-6-methoxy-1,4-benzoquinol. The protein is 2-octaprenyl-6-methoxyphenol hydroxylase (ubiH) of Escherichia coli (strain K12).